A 122-amino-acid polypeptide reads, in one-letter code: Large ribosomal subunit protein uL14 (122 aa).

Belongs to the universal ribosomal protein uL14 family. As to quaternary structure, part of the 50S ribosomal subunit. Forms a cluster with proteins L3 and L19. In the 70S ribosome, L14 and L19 interact and together make contacts with the 16S rRNA in bridges B5 and B8.

Its function is as follows. Binds to 23S rRNA. Forms part of two intersubunit bridges in the 70S ribosome. The protein is Large ribosomal subunit protein uL14 of Francisella tularensis subsp. holarctica (strain LVS).